The following is a 130-amino-acid chain: Small ribosomal subunit protein uS11 (130 aa).

Basic residues predominate over residues 1 to 15 (MARPTKKSGPRKQKR). The tract at residues 1–21 (MARPTKKSGPRKQKRNVPSGV) is disordered.

It belongs to the universal ribosomal protein uS11 family. Part of the 30S ribosomal subunit. Interacts with proteins S7 and S18. Binds to IF-3.

In terms of biological role, located on the platform of the 30S subunit, it bridges several disparate RNA helices of the 16S rRNA. Forms part of the Shine-Dalgarno cleft in the 70S ribosome. This Synechococcus elongatus (strain ATCC 33912 / PCC 7942 / FACHB-805) (Anacystis nidulans R2) protein is Small ribosomal subunit protein uS11.